A 255-amino-acid polypeptide reads, in one-letter code: MYRTLGSIALLAGGAAAHGAVTSYNIAGKDYPGYSGFAPTGQDVIQWQWPDYNPVLSASDPKLRCNGGTGAALYAEAAPGDTITATWAQWTHSQGPILVWMYKCPGDFSSCDGSGAGWFKIDEAGFHGDGTTVFLDTETPSGWDIAKLVGGNKSWSSKIPDGLAPGNYLVRHELIALHQANNPQFYPECAQIKVTGSGTAEPAASYKAAIPGYCQQSDPNISFNINDHSLPQEYKIPGPPVFKGTASAKARAFQA.

The signal sequence occupies residues 1–19 (MYRTLGSIALLAGGAAAHG). Residues His18 and His92 each contribute to the Cu(2+) site. Intrachain disulfides connect Cys65/Cys189 and Cys104/Cys111. Asn152 is a glycosylation site (N-linked (GlcNAc...) asparagine). O2 is bound by residues His178 and Gln184. Tyr186 contributes to the Cu(2+) binding site. Asn220 is a glycosylation site (N-linked (GlcNAc...) asparagine).

The protein belongs to the polysaccharide monooxygenase AA9 family. The cofactor is Cu(2+).

The protein resides in the secreted. The catalysed reaction is [(1-&gt;4)-beta-D-glucosyl]n+m + reduced acceptor + O2 = 4-dehydro-beta-D-glucosyl-[(1-&gt;4)-beta-D-glucosyl]n-1 + [(1-&gt;4)-beta-D-glucosyl]m + acceptor + H2O.. In terms of biological role, lytic polysaccharide monooxygenase (LPMO) that depolymerizes crystalline and amorphous polysaccharides via the oxidation of scissile alpha- or beta-(1-4)-glycosidic bonds, yielding specifically C1 oxidation product. Catalysis by LPMOs requires the reduction of the active-site copper from Cu(II) to Cu(I) by a reducing agent and H(2)O(2) or O(2) as a cosubstrate. Is active on regenerated amorphous cellulose (RAC) in the presence of ascorbic acid or 3-methylcatechol. Also acts on phosphoric acid swollen cellulose (PASC) as a substrate. The sequence is that of AA9 family lytic polysaccharide monooxygenase D from Thermothelomyces thermophilus (strain ATCC 42464 / BCRC 31852 / DSM 1799) (Sporotrichum thermophile).